We begin with the raw amino-acid sequence, 152 residues long: MAEEPKGVPLSELSLQQLGELQKNCEQELNFFQESFNALKGLLTRNEKSISALDDVKIATAGHTALIPLSESLYIRAELSDPSKHLVEIGTGYFVELDREKAKAIFDRKKEHITKQVETVEGILKEKRRTRAYISDAFQTKVQSQLATMNTQ.

It belongs to the prefoldin subunit alpha family. Heterohexamer of two PFD-alpha type and four PFD-beta type subunits.

Its function is as follows. Binds specifically to cytosolic chaperonin (c-CPN) and transfers target proteins to it. Binds to nascent polypeptide chain and promotes folding in an environment in which there are many competing pathways for nonnative proteins. The polypeptide is Probable prefoldin subunit 5 (pfd-5) (Caenorhabditis elegans).